The chain runs to 703 residues: MTDVLTRYNSGKLWDFDGGIHPPEMKSQSNSTPISTALLAEDYYVPVKQHAGNAGNLLVKEGDYVLKGQPLTLGDGLRVLPVHAPTSGTVVAIEPHIAAHPSGLSELAVHIHADGKDQWRPQNPTEDYFTHTPERLIEKIYRAGVAGLGGAVFPTGAKVDAALGKVKLLIINGAECEPYITCDDRLMRDYAAEIIEGVRILRYILRPEKVVIAIEDNKPEAVNALRTSLQGANDMDIRVIPTKYPSGAAKQLIYVLTGMEVPHGQRSSSIGVLMQNVGTAFAVKRAVINDEPLIERVVTLTGDKIPHKGNQWVRLGTPIDFILKHVGYQPDNRFPVFVGGPMMGLIVPDLRAPITKTANCLLAPDHFEYDPQATEQACIRCSACSDACPVHLMPQQMYWYARAEDHEKSNQYQLMDCIECGLCAYVCPSHIPLIQYFRQEKAKIWDIEAKARKSEEAKIRFEARQARLEREEQARKARSQRAAAARREELAANKGEDPVQAALARLKAKKAGEAPETGGSAQGAPHIKTIRTEKGQSVPDNSEITALRRARRLARQQTNGNSPVSSASNSDSATISADNTHSTPKTAQNQTAPDPKKAAVAVAIARAKAKKAAQTTTGETVTENVTEKTAQNPTAPDPKKAAVAAAIARAKAKKAAQATTGETATEKTAQNPTAPDPKKAAVAAAIARAKAKKAAMLAESEKK.

4Fe-4S ferredoxin-type domains are found at residues 369–398 and 408–437; these read YDPQATEQACIRCSACSDACPVHLMPQQMY and KSNQYQLMDCIECGLCAYVCPSHIPLIQYF. [4Fe-4S] cluster-binding residues include Cys-378, Cys-381, Cys-384, Cys-388, Cys-417, Cys-420, Cys-423, and Cys-427. Disordered regions lie at residues 467 to 542 and 555 to 680; these read RLER…PDNS and RQQT…PKKA. Residues 485–497 show a composition bias toward basic and acidic residues; it reads ARREELAANKGED. The segment covering 559–577 has biased composition (low complexity); the sequence is NGNSPVSSASNSDSATISA. Residues 578 to 592 show a composition bias toward polar residues; it reads DNTHSTPKTAQNQTA. Low complexity-rich tracts occupy residues 598–629 and 641–669; these read AAVAVAIARAKAKKAAQTTTGETVTENVTEKT and AAVAAAIARAKAKKAAQATTGETATEKTA.

Belongs to the 4Fe4S bacterial-type ferredoxin family. RnfC subfamily. In terms of assembly, the complex is composed of six subunits: RnfA, RnfB, RnfC, RnfD, RnfE and RnfG. [4Fe-4S] cluster is required as a cofactor.

The protein localises to the cell inner membrane. Part of a membrane-bound complex that couples electron transfer with translocation of ions across the membrane. This is Ion-translocating oxidoreductase complex subunit C from Actinobacillus succinogenes (strain ATCC 55618 / DSM 22257 / CCUG 43843 / 130Z).